A 142-amino-acid chain; its full sequence is Small ribosomal subunit protein uS12 (142 aa).

It belongs to the universal ribosomal protein uS12 family.

This is Small ribosomal subunit protein uS12 from Tetrahymena thermophila.